A 158-amino-acid chain; its full sequence is Low molecular weight phosphotyrosine protein phosphatase (158 aa).

Ala2 is modified (N-acetylalanine). Cys13 acts as the Nucleophile in catalysis. Arg19 is an active-site residue. The active-site Proton donor is Asp130. Tyr132 and Tyr133 each carry phosphotyrosine.

This sequence belongs to the low molecular weight phosphotyrosine protein phosphatase family. Interacts with EPHA2; dephosphorylates EPHA2. Interacts with EPHB1. As to quaternary structure, interacts with the SH3 domain of SPTAN1. There is no interaction observed for isoform 2. Phosphorylated by LCK. Phosphorylation at Tyr-132 increases its phosphatase activity. As to expression, widely expressed with highest levels in brain and liver and lowest levels in muscle.

The protein localises to the cytoplasm. It catalyses the reaction O-phospho-L-tyrosyl-[protein] + H2O = L-tyrosyl-[protein] + phosphate. The catalysed reaction is a phosphate monoester + H2O = an alcohol + phosphate. Its activity is regulated as follows. Inhibited by sulfhydryl reagents. Its function is as follows. Acts on tyrosine phosphorylated proteins, low-MW aryl phosphates and natural and synthetic acyl phosphates with differences in substrate specificity between isoform 1 and isoform 2. The protein is Low molecular weight phosphotyrosine protein phosphatase of Mus musculus (Mouse).